Here is a 529-residue protein sequence, read N- to C-terminus: Peptide chain release factor 3 (529 aa).

In terms of domain architecture, tr-type G spans 11 to 280 (AKRRTFAIIS…GLVEWAPAPM (270 aa)). GTP is bound by residues 20–27 (SHPDAGKT), 88–92 (DTPGH), and 142–145 (NKLD).

It belongs to the TRAFAC class translation factor GTPase superfamily. Classic translation factor GTPase family. PrfC subfamily.

It localises to the cytoplasm. Increases the formation of ribosomal termination complexes and stimulates activities of RF-1 and RF-2. It binds guanine nucleotides and has strong preference for UGA stop codons. It may interact directly with the ribosome. The stimulation of RF-1 and RF-2 is significantly reduced by GTP and GDP, but not by GMP. This is Peptide chain release factor 3 from Shigella flexneri serotype 5b (strain 8401).